The chain runs to 940 residues: Translation initiation factor IF-2 (940 aa).

Disordered regions lie at residues 48–264 (ESFG…VESK) and 278–351 (QVAE…TERK). 5 stretches are compositionally biased toward basic and acidic residues: residues 65–95 (SKPE…KEEV), 112–125 (FKAE…EQAA), 155–206 (NNER…REAA), 232–258 (RTSE…KFEE), and 292–301 (ARPDKKRDFN). Residues 314 to 332 (NRNSQNQVRNQRTSNWNNN) are compositionally biased toward low complexity. A tr-type G domain is found at 442–609 (ERPPVVTIMG…TVLLVAEIQE (168 aa)). The segment at 451 to 458 (GHVDHGKT) is G1. 451 to 458 (GHVDHGKT) is a GTP binding site. A G2 region spans residues 476–480 (GITQH). Positions 497–500 (DTPG) are G3. GTP-binding positions include 497-501 (DTPGH) and 551-554 (NKID). Positions 551–554 (NKID) are G4. The G5 stretch occupies residues 587 to 589 (SAK).

This sequence belongs to the TRAFAC class translation factor GTPase superfamily. Classic translation factor GTPase family. IF-2 subfamily.

It localises to the cytoplasm. One of the essential components for the initiation of protein synthesis. Protects formylmethionyl-tRNA from spontaneous hydrolysis and promotes its binding to the 30S ribosomal subunits. Also involved in the hydrolysis of GTP during the formation of the 70S ribosomal complex. The sequence is that of Translation initiation factor IF-2 from Streptococcus suis (strain 98HAH33).